Reading from the N-terminus, the 188-residue chain is dCTP deaminase (188 aa).

DCTP contacts are provided by residues 111-116 (KSTYAR), 135-137 (TLE), Gln-156, Tyr-170, and Gln-180. The Proton donor/acceptor role is filled by Glu-137.

Belongs to the dCTP deaminase family. As to quaternary structure, homotrimer.

It catalyses the reaction dCTP + H2O + H(+) = dUTP + NH4(+). The protein operates within pyrimidine metabolism; dUMP biosynthesis; dUMP from dCTP (dUTP route): step 1/2. In terms of biological role, catalyzes the deamination of dCTP to dUTP. This chain is dCTP deaminase, found in Marinobacter nauticus (strain ATCC 700491 / DSM 11845 / VT8) (Marinobacter aquaeolei).